Here is a 95-residue protein sequence, read N- to C-terminus: Small ribosomal subunit protein bS6 (95 aa).

Belongs to the bacterial ribosomal protein bS6 family.

Its function is as follows. Binds together with bS18 to 16S ribosomal RNA. The protein is Small ribosomal subunit protein bS6 of Clostridium kluyveri (strain NBRC 12016).